The following is a 534-amino-acid chain: Cytokinin dehydrogenase 5 (534 aa).

The first 20 residues, Met-1–Gly-20, serve as a signal peptide directing secretion. An FAD-binding PCMH-type domain is found at Thr-59–Ala-243. Positions 93, 95, and 97 each coordinate FAD. His-98 is modified (pros-8alpha-FAD histidine). FAD is bound by residues Ser-99 and Gln-103. A glycan (N-linked (GlcNAc...) asparagine) is linked at Asn-152. The FAD site is built by Asp-167, Ser-172, Ser-178, Ile-182, and Ile-233. Residue Asn-256 is glycosylated (N-linked (GlcNAc...) asparagine). Positions 484 and 522 each coordinate FAD.

Belongs to the oxygen-dependent FAD-linked oxidoreductase family. As to quaternary structure, monomer. It depends on FAD as a cofactor. Expressed in inflorescence meristems.

Its subcellular location is the secreted. It is found in the extracellular space. The catalysed reaction is N(6)-dimethylallyladenine + A + H2O = 3-methyl-2-butenal + adenine + AH2. Catalyzes the oxidation of cytokinins, a family of N(6)-substituted adenine derivatives that are plant hormones, where the substituent is an isopentenyl group. The polypeptide is Cytokinin dehydrogenase 5 (CKX5) (Oryza sativa subsp. japonica (Rice)).